A 149-amino-acid polypeptide reads, in one-letter code: MSRRKTREPKEENVLGPTVREGEFVFGVAHIFASFNDTFIHVTDLSGRETLVRITGGMKVKADRDESSPYAAMLAAQDVAQRCKELGITALHIKLRATGGNKTKTPGPGAQSALRALARSGMKIGRIEDVTPVPTDSTRRKGGRRGRRL.

The tract at residues 130-149 is disordered; the sequence is VTPVPTDSTRRKGGRRGRRL. A compositionally biased stretch (basic residues) spans 140 to 149; the sequence is RKGGRRGRRL.

It belongs to the universal ribosomal protein uS11 family.

The protein is Small ribosomal subunit protein uS11z of Zea mays (Maize).